We begin with the raw amino-acid sequence, 902 residues long: Translation initiation factor IF-2 (902 aa).

Basic and acidic residues-rich tracts occupy residues 1–12 (MVDTKTPGDKKL) and 43–60 (VVEK…EPHA). The segment at 1–276 (MVDTKTPGDK…KPGPQKERGR (276 aa)) is disordered. Positions 69–84 (PAAPAPSRPAPPPAPP) are enriched in pro residues. Over residues 111–174 (AKLREVEERR…ETEAKKRFGE (64 aa)) the composition is skewed to basic and acidic residues. 2 stretches are compositionally biased toward low complexity: residues 181-190 (AARPATAAPA) and 198-237 (APAA…AVAA). In terms of domain architecture, tr-type G spans 398-567 (TRSPVVTVMG…MIALQADILD (170 aa)). Positions 407 to 414 (GHVDHGKT) are G1. Residue 407 to 414 (GHVDHGKT) participates in GTP binding. A G2 region spans residues 432–436 (GITQH). The G3 stretch occupies residues 455 to 458 (DTPG). Residues 455 to 459 (DTPGH) and 509 to 512 (NKID) contribute to the GTP site. Residues 509 to 512 (NKID) form a G4 region. Positions 545 to 547 (SAK) are G5.

Belongs to the TRAFAC class translation factor GTPase superfamily. Classic translation factor GTPase family. IF-2 subfamily.

It localises to the cytoplasm. Its function is as follows. One of the essential components for the initiation of protein synthesis. Protects formylmethionyl-tRNA from spontaneous hydrolysis and promotes its binding to the 30S ribosomal subunits. Also involved in the hydrolysis of GTP during the formation of the 70S ribosomal complex. This is Translation initiation factor IF-2 from Bradyrhizobium diazoefficiens (strain JCM 10833 / BCRC 13528 / IAM 13628 / NBRC 14792 / USDA 110).